We begin with the raw amino-acid sequence, 201 residues long: 3-isopropylmalate dehydratase small subunit (201 aa).

The protein belongs to the LeuD family. LeuD type 1 subfamily. Heterodimer of LeuC and LeuD.

The catalysed reaction is (2R,3S)-3-isopropylmalate = (2S)-2-isopropylmalate. The protein operates within amino-acid biosynthesis; L-leucine biosynthesis; L-leucine from 3-methyl-2-oxobutanoate: step 2/4. Functionally, catalyzes the isomerization between 2-isopropylmalate and 3-isopropylmalate, via the formation of 2-isopropylmaleate. The sequence is that of 3-isopropylmalate dehydratase small subunit from Buchnera aphidicola subsp. Baizongia pistaciae (strain Bp).